The following is a 156-amino-acid chain: Small ribosomal subunit protein uS7 (156 aa).

Belongs to the universal ribosomal protein uS7 family. As to quaternary structure, part of the 30S ribosomal subunit. Contacts proteins S9 and S11.

In terms of biological role, one of the primary rRNA binding proteins, it binds directly to 16S rRNA where it nucleates assembly of the head domain of the 30S subunit. Is located at the subunit interface close to the decoding center, probably blocks exit of the E-site tRNA. The chain is Small ribosomal subunit protein uS7 from Mycobacterium ulcerans (strain Agy99).